Here is a 238-residue protein sequence, read N- to C-terminus: Snake venom metalloproteinase HF-1 (238 aa).

One can recognise a Peptidase M12B domain in the interval Arg17–Pro221. Asp106 provides a ligand contact to Ca(2+). Cystine bridges form between Cys130–Cys216 and Cys174–Cys181. Residue His158 coordinates Zn(2+). Glu159 is an active-site residue. Residues His162 and His168 each coordinate Zn(2+). Ca(2+) contacts are provided by Cys216 and Asn219.

In terms of assembly, monomer. Zn(2+) serves as cofactor. As to expression, expressed by the venom gland.

It is found in the secreted. With respect to regulation, inhibited by EDTA and EGTA. Inhibited by serum and antihemorrhagic factors Da2-I and Da2-II from D.albiventris. Not inhibited by PMSF or SBT-I. In terms of biological role, snake venom zinc metalloprotease that is weakly hemorrhagic and has Aalpha, Bbeta fibrinogenolytic activities. Cleaves the Aalpha chain of fibrinogen first, followed by the Bbeta chain and shows no effect on the gamma chain. Has caseinolytic activity. Induces dose-dependent edema. This is Snake venom metalloproteinase HF-1 from Bothrops marajoensis (Marajo lancehead).